We begin with the raw amino-acid sequence, 411 residues long: Serine--tRNA ligase (411 aa).

L-serine is bound at residue 226 to 228 (TSE). 257–259 (RQE) lines the ATP pocket. Residue glutamate 280 coordinates L-serine. 344–347 (EISS) is a binding site for ATP. Serine 379 is a binding site for L-serine.

This sequence belongs to the class-II aminoacyl-tRNA synthetase family. Type-1 seryl-tRNA synthetase subfamily. As to quaternary structure, homodimer. The tRNA molecule binds across the dimer.

Its subcellular location is the cytoplasm. It carries out the reaction tRNA(Ser) + L-serine + ATP = L-seryl-tRNA(Ser) + AMP + diphosphate + H(+). The catalysed reaction is tRNA(Sec) + L-serine + ATP = L-seryl-tRNA(Sec) + AMP + diphosphate + H(+). It functions in the pathway aminoacyl-tRNA biosynthesis; selenocysteinyl-tRNA(Sec) biosynthesis; L-seryl-tRNA(Sec) from L-serine and tRNA(Sec): step 1/1. Catalyzes the attachment of serine to tRNA(Ser). Is also able to aminoacylate tRNA(Sec) with serine, to form the misacylated tRNA L-seryl-tRNA(Sec), which will be further converted into selenocysteinyl-tRNA(Sec). This is Serine--tRNA ligase from Campylobacter lari (strain RM2100 / D67 / ATCC BAA-1060).